The chain runs to 383 residues: Lipid-A-disaccharide synthase (383 aa).

This sequence belongs to the LpxB family.

The enzyme catalyses a lipid X + a UDP-2-N,3-O-bis[(3R)-3-hydroxyacyl]-alpha-D-glucosamine = a lipid A disaccharide + UDP + H(+). Its pathway is bacterial outer membrane biogenesis; LPS lipid A biosynthesis. In terms of biological role, condensation of UDP-2,3-diacylglucosamine and 2,3-diacylglucosamine-1-phosphate to form lipid A disaccharide, a precursor of lipid A, a phosphorylated glycolipid that anchors the lipopolysaccharide to the outer membrane of the cell. The protein is Lipid-A-disaccharide synthase of Aliivibrio fischeri (strain ATCC 700601 / ES114) (Vibrio fischeri).